We begin with the raw amino-acid sequence, 265 residues long: Dehydrogenase RED2 (265 aa).

The chain crosses the membrane as a helical span at residues 6–26 (SFLLSKLFLCIALCTAYVAFS). N-linked (GlcNAc...) asparagine glycosylation is present at Asn45. Residues 47 to 67 (TSTVFGLTIVAIGLSALSSWL) form a helical membrane-spanning segment. The N-linked (GlcNAc...) asparagine glycan is linked to Asn74. NADP(+) is bound at residue Val89. N-linked (GlcNAc...) asparagine glycosylation is present at Asn127. 2 residues coordinate NADP(+): Asp136 and Asn163. A glycan (N-linked (GlcNAc...) asparagine) is linked at Asn176. Catalysis depends on Ser216, which acts as the Proton donor. Residues Tyr228 and Lys232 each contribute to the NADP(+) site. Tyr228 acts as the Proton acceptor in catalysis. The active-site Lowers pKa of active site Tyr is the Lys232.

Belongs to the short-chain dehydrogenases/reductases (SDR) family.

It localises to the membrane. It catalyses the reaction a primary alcohol + NAD(+) = an aldehyde + NADH + H(+). It carries out the reaction a secondary alcohol + NAD(+) = a ketone + NADH + H(+). It functions in the pathway mycotoxin biosynthesis. Dehydrogenase; part of the Tox1B locus, one of the 2 loci that mediate the biosynthesis of T-toxin, a family of linear polyketides 37 to 45 carbons in length, of which the major component is 41 carbons, and which leads to high virulence to maize. One of the PKSs (PKS1 or PKS2) could synthesize a precursor, used subsequently by the other PKS as starter unit, to add additional carbons. Variability in the length of the final carbon backbone C35-47 could be achieved by varying the number of condensation cycles, or use of different starter or extender units or might be due to decarboxylation of the penultimate product, catalyzed by DEC1. Additional proteins are required for the biosynthesis of T-toxin, including oxidoreductases RED1, RED2, RED3, LAM1 and OXI1, as well as esterase TOX9. This is Dehydrogenase RED2 from Cochliobolus heterostrophus (strain C4 / ATCC 48331 / race T) (Southern corn leaf blight fungus).